A 344-amino-acid chain; its full sequence is Probable dual-specificity RNA methyltransferase RlmN (344 aa).

Glu-89 acts as the Proton acceptor in catalysis. Positions 95–329 (TDQRLTVCVS…VSLRASRGLD (235 aa)) constitute a Radical SAM core domain. The cysteines at positions 102 and 334 are disulfide-linked. Positions 109, 113, and 116 each coordinate [4Fe-4S] cluster. Residues 156 to 157 (GE), Ser-186, 215 to 217 (SLH), and Asn-291 each bind S-adenosyl-L-methionine. Residue Cys-334 is the S-methylcysteine intermediate of the active site.

It belongs to the radical SAM superfamily. RlmN family. [4Fe-4S] cluster is required as a cofactor.

Its subcellular location is the cytoplasm. The enzyme catalyses adenosine(2503) in 23S rRNA + 2 reduced [2Fe-2S]-[ferredoxin] + 2 S-adenosyl-L-methionine = 2-methyladenosine(2503) in 23S rRNA + 5'-deoxyadenosine + L-methionine + 2 oxidized [2Fe-2S]-[ferredoxin] + S-adenosyl-L-homocysteine. It carries out the reaction adenosine(37) in tRNA + 2 reduced [2Fe-2S]-[ferredoxin] + 2 S-adenosyl-L-methionine = 2-methyladenosine(37) in tRNA + 5'-deoxyadenosine + L-methionine + 2 oxidized [2Fe-2S]-[ferredoxin] + S-adenosyl-L-homocysteine. Its function is as follows. Specifically methylates position 2 of adenine 2503 in 23S rRNA and position 2 of adenine 37 in tRNAs. The sequence is that of Probable dual-specificity RNA methyltransferase RlmN from Parasynechococcus marenigrum (strain WH8102).